Reading from the N-terminus, the 313-residue chain is Acetaldehyde dehydrogenase (313 aa).

15–18 (SGNI) contacts NAD(+). Catalysis depends on Cys-133, which acts as the Acyl-thioester intermediate. Residues 164 to 172 (SAGPGTRAN) and Asn-289 contribute to the NAD(+) site.

This sequence belongs to the acetaldehyde dehydrogenase family.

The enzyme catalyses acetaldehyde + NAD(+) + CoA = acetyl-CoA + NADH + H(+). This chain is Acetaldehyde dehydrogenase, found in Rhizobium rhizogenes (strain K84 / ATCC BAA-868) (Agrobacterium radiobacter).